The sequence spans 576 residues: Urease subunit alpha (576 aa).

The 445-residue stretch at 132–576 folds into the Urease domain; sequence GGVDTHIHFI…LPMAQRYFLF (445 aa). Ni(2+) is bound by residues His137, His139, and Lys220. Residue Lys220 is modified to N6-carboxylysine. Position 222 (His222) interacts with substrate. Ni(2+)-binding residues include His249 and His275. His323 acts as the Proton donor in catalysis. Residue Asp363 participates in Ni(2+) binding.

The protein belongs to the metallo-dependent hydrolases superfamily. Urease alpha subunit family. As to quaternary structure, heterotrimer of UreA (gamma), UreB (beta) and UreC (alpha) subunits. Three heterotrimers associate to form the active enzyme. Ni cation serves as cofactor. Carboxylation allows a single lysine to coordinate two nickel ions.

It localises to the cytoplasm. It catalyses the reaction urea + 2 H2O + H(+) = hydrogencarbonate + 2 NH4(+). It functions in the pathway nitrogen metabolism; urea degradation; CO(2) and NH(3) from urea (urease route): step 1/1. This Arthrobacter sp. (strain FB24) protein is Urease subunit alpha.